The following is a 126-amino-acid chain: Thioredoxin domain-containing protein, mitochondrial (126 aa).

The Thioredoxin domain occupies 14–120 (SQKIATNTSF…ILEFLNHIET (107 aa)).

It belongs to the thioredoxin family.

The protein resides in the mitochondrion. In Dictyostelium discoideum (Social amoeba), this protein is Thioredoxin domain-containing protein, mitochondrial.